Reading from the N-terminus, the 370-residue chain is Muconate cycloisomerase 1 (370 aa).

The active site involves Lys-166. 3 residues coordinate Mn(2+): Asp-195, Glu-221, and Asp-246.

The protein belongs to the mandelate racemase/muconate lactonizing enzyme family. As to quaternary structure, homooctamer. It depends on Mn(2+) as a cofactor.

It carries out the reaction (S)-muconolactone = cis,cis-muconate + H(+). Its pathway is aromatic compound metabolism; beta-ketoadipate pathway; 5-oxo-4,5-dihydro-2-furylacetate from catechol: step 2/3. In terms of biological role, catalyzes a syn cycloisomerization. The chain is Muconate cycloisomerase 1 (catB) from Acinetobacter baylyi (strain ATCC 33305 / BD413 / ADP1).